A 492-amino-acid polypeptide reads, in one-letter code: MRLAAASNEAYAASLAVSELLSCHQCGGDRGQDEELGIRIPRPLGHGPSRFIPEKEMLQVGSEDAQMHALFADSFAALGRLDNITLVMVFHPQYLESFLKTQHYLLQMDGPLPLHYRHYIGIMAAARHQCSYLVNLHVSDFLHVGGDPKWLNGLENAPQKLQNLGELNKVLAHRPWLITKEHIEGLLKAEEHSWSLAELVHAVVLLTHYHSLASFTFGCGISPEIHCDGGHTFRPPSVSNYCICDITNGNHSVDEMQVNSAGNASVSDSFFEVEALMEKMRQLQECREEEEASQEEMASRFEMEKRESMFVFSSDDDEVTPARDVSRHFEDTSYGYKDFSRHGMHVPTFRVQDYCWEDHGYSLVNRLYPDVGQLIDEKFHIAYNLTYNTMAMHKDVDTSMLRRAIWNYIHCMFGIRYDDYDYGEINQLLDRSFKVYIKTVVCTPEKVTKRMYDSFWRQFKHSEKVHVNLLLIEARMQAELLYALRAITRYMT.

The segment at 71–252 is N-terminal domain; may mediate the alkylhydroperoxide reductase activity; it reads FADSFAALGR…ICDITNGNHS (182 aa). Cysteine 130 acts as the Cysteine sulfenic acid (-SOH) intermediate in catalysis. 2 positions are modified to phosphoserine: serine 293 and serine 314. Positions 321 to 492 are C-terminal domain; mediates TORC1 regulation; that stretch reads PARDVSRHFE…ALRAITRYMT (172 aa). Residues 386–389, threonine 398, and glutamate 463 contribute to the L-leucine site; that span reads TYNT.

This sequence belongs to the sestrin family. Interacts with the GATOR2 complex which is composed of MIOS, SEC13, SEH1L, WDR24 and WDR59; the interaction is negatively regulated by leucine. Interacts with RRAGA, RRAGB, RRAGC and RRAGD; may function as a guanine nucleotide dissociation inhibitor for RRAGs and regulate them. Interacts with KEAP1, RBX1 and SQSTM1; in the SQSTM1-dependent autophagic degradation of KEAP1. May interact with PRDX1. Highly expressed in heart and also detected in liver and skeletal muscles (at protein level).

The protein localises to the nucleus. It localises to the cytoplasm. The catalysed reaction is a hydroperoxide + L-cysteinyl-[protein] = S-hydroxy-L-cysteinyl-[protein] + an alcohol. Functions as an intracellular leucine sensor that negatively regulates the TORC1 signaling pathway through the GATOR complex. In absence of leucine, binds the GATOR subcomplex GATOR2 and prevents TORC1 signaling. Binding of leucine to SESN2 disrupts its interaction with GATOR2 thereby activating the TORC1 signaling pathway. This stress-inducible metabolic regulator may also play a role in protection against oxidative and genotoxic stresses. May positively regulate the transcription by NFE2L2 of genes involved in the response to oxidative stress by facilitating the SQSTM1-mediated autophagic degradation of KEAP1. Moreover, may prevent the accumulation of reactive oxygen species (ROS) through the alkylhydroperoxide reductase activity born by the N-terminal domain of the protein. Was originally reported to contribute to oxidative stress resistance by reducing PRDX1. However, this could not be confirmed. The protein is Sestrin-1 of Mus musculus (Mouse).